A 355-amino-acid chain; its full sequence is Double-stranded RNA-binding protein 4 (355 aa).

2 DRBM domains span residues 4–73 and 82–150; these read VYKG…SLTP and AYKN…SIKN. Polar residues predominate over residues 149–188; it reads KNGNSNQTGSPTLPSERQEDVNSNVKSSPQEIHSQPSSKV. The interval 149–193 is disordered; that stretch reads KNGNSNQTGSPTLPSERQEDVNSNVKSSPQEIHSQPSSKVVMTPD.

In terms of assembly, heterodimer with DRB1 or DRB5. Interacts with DCL4 and cauliflower mosaic virus (CaMV) transactivator/viroplasmin protein. Interaction with CaMV transactivator/viroplasmin protein inhibits RNA silencing ability of DRB4. As to expression, expressed in roots, leaf vasculature, shoot apical meristem (SAM) and developing anthers.

It is found in the nucleus. Double-stranded RNA-binding protein involved in RNA-mediated post-transcriptional gene silencing (PTGS). Functions in the trans-acting small interfering RNAs (ta-siRNAs) biogenesis by binding and assisting DICER-LIKE 4 (DCL4). Required for DCL4 activity. Required for the 21 nucleotide ta-siRNAs production of the TAS3 transcript in leaves but not in flowers. Plays an important role in silencing RNA of both DNA and RNA viruses. Involved with argonaute 7 (AGO7) and RDR6 in turnip crinkle virus (TCV) silencing. May not be directly involved in viral siRNA production. May stabilize the 21 nucleotide viral siRNAs and deliver them to the RISC complex. Targeted by the viral silencing suppressor (VSR) transactivator/viroplasmin (TAV) protein of the cauliflower mosaic virus (CaMV) that inactivates DRB4 function in RNA silencing. Probably not involved in the guide strand selection from RNA duplexes. Involved in leaf morphology through its function in ta-siRNA-mediated silencing. The protein is Double-stranded RNA-binding protein 4 (DBR4) of Arabidopsis thaliana (Mouse-ear cress).